The following is a 207-amino-acid chain: Probable nicotinate-nucleotide adenylyltransferase (207 aa).

The protein belongs to the NadD family.

The enzyme catalyses nicotinate beta-D-ribonucleotide + ATP + H(+) = deamido-NAD(+) + diphosphate. The protein operates within cofactor biosynthesis; NAD(+) biosynthesis; deamido-NAD(+) from nicotinate D-ribonucleotide: step 1/1. Catalyzes the reversible adenylation of nicotinate mononucleotide (NaMN) to nicotinic acid adenine dinucleotide (NaAD). This chain is Probable nicotinate-nucleotide adenylyltransferase, found in Synechococcus sp. (strain JA-3-3Ab) (Cyanobacteria bacterium Yellowstone A-Prime).